The primary structure comprises 152 residues: Methylglyoxal synthase (152 aa).

Residues 6 to 152 (RTMATAKNIA…YQHYLNGRLK (147 aa)) enclose the MGS-like domain. Substrate contacts are provided by residues His-19, Lys-23, 45–48 (TGTT), and 65–66 (SG). Catalysis depends on Asp-71, which acts as the Proton donor/acceptor. Position 98 (His-98) interacts with substrate.

This sequence belongs to the methylglyoxal synthase family.

The catalysed reaction is dihydroxyacetone phosphate = methylglyoxal + phosphate. Catalyzes the formation of methylglyoxal from dihydroxyacetone phosphate. The polypeptide is Methylglyoxal synthase (Photorhabdus laumondii subsp. laumondii (strain DSM 15139 / CIP 105565 / TT01) (Photorhabdus luminescens subsp. laumondii)).